A 536-amino-acid chain; its full sequence is GPI alpha-1,2-mannosyltransferase 3 (536 aa).

The N-linked (GlcNAc...) asparagine glycan is linked to Asn15. Transmembrane regions (helical) follow at residues Ile40 to Val60 and Val118 to Val138. An N-linked (GlcNAc...) asparagine glycan is attached at Asn176. The next 6 membrane-spanning stretches (helical) occupy residues Leu206 to Phe226, Tyr243 to Gly263, Gly297 to Thr317, Ile322 to Phe342, Phe344 to Gln364, and Ala369 to His389. A glycan (N-linked (GlcNAc...) asparagine) is linked at Asn467.

The protein belongs to the glycosyltransferase 22 family. PIGB subfamily.

Its subcellular location is the endoplasmic reticulum membrane. Its pathway is glycolipid biosynthesis; glycosylphosphatidylinositol-anchor biosynthesis. Alpha-1,2-mannosyltransferase that catalyzes the transfer of the third mannose, via an alpha-1,2 bond, from a dolichol-phosphate-mannose (Dol-P-Man) to an alpha-D-Man-(1-&gt;6)-2-PEtn-alpha-D-Man-(1-&gt;4)-alpha-D-GlcN-(1-&gt;6)-(1-radyl,2-acyl-sn-glycero-3-phospho)-2-acyl-inositol intermediate to generate an alpha-D-Man-(1-&gt;2)-alpha-D-Man-(1-&gt;6)-2-PEtn-alpha-D-Man-(1-&gt;4)-alpha-D-GlcN-(1-&gt;6)-(1-radyl,2-acyl-sn-glycero-3-phospho)-2-acyl-inositol (also termed H6) and participates in the nineth step of the glycosylphosphatidylinositol-anchor biosynthesis. May also add the third mannose to an alpha-D-Man-(1-&gt;6)-alpha-D-Man-(1-&gt;4)-alpha-D-GlcN-(1-&gt;6)-(1-radyl,2-acyl-sn-glycero-3-phospho)-2-acyl-inositol (also termed H3) intermediate generating an alpha-D-Man-(1-&gt;2)-alpha-D-Man-(1-&gt;6)-alpha-D-Man-(1-&gt;4)-alpha-D-GlcN-(1-&gt;6)-(1-radyl,2-acyl-sn-glycero-3-phospho)-2-acyl-inositol (also termed H4). The chain is GPI alpha-1,2-mannosyltransferase 3 from Danio rerio (Zebrafish).